The primary structure comprises 221 residues: MDIEKAGSRREEEEPIVQRPKLDKGKGKAHVFAPPMNYNRIMDKHKQEKMSPAGWKRGVAIFDFVLRLIAAITAMAAAAKMATTEETLPFFTQFLQFQADYTDLPTMSSFVIVNSIVGGYLTLSLPFSIVCILRPLAVPPRLFLILCDTVMMGLTLMAASASAAIVYLAHNGNSSSNWLPVCQQFGDFCQGTSGAVVASFIAATLLMFLVILSAFALKRTT.

Residues 1-12 show a composition bias toward basic and acidic residues; that stretch reads MDIEKAGSRREE. The segment at 1 to 27 is disordered; sequence MDIEKAGSRREEEEPIVQRPKLDKGKG. Residues 1 to 58 are Cytoplasmic-facing; that stretch reads MDIEKAGSRREEEEPIVQRPKLDKGKGKAHVFAPPMNYNRIMDKHKQEKMSPAGWKRG. Residues 59 to 79 traverse the membrane as a helical segment; sequence VAIFDFVLRLIAAITAMAAAA. Topologically, residues 80–109 are extracellular; that stretch reads KMATTEETLPFFTQFLQFQADYTDLPTMSS. A helical transmembrane segment spans residues 110 to 130; it reads FVIVNSIVGGYLTLSLPFSIV. Residues 131–148 are Cytoplasmic-facing; sequence CILRPLAVPPRLFLILCD. Residues 149–169 form a helical membrane-spanning segment; the sequence is TVMMGLTLMAASASAAIVYLA. At 170 to 194 the chain is on the extracellular side; sequence HNGNSSSNWLPVCQQFGDFCQGTSG. N-linked (GlcNAc...) asparagine glycosylation is present at N173. The chain crosses the membrane as a helical span at residues 195-215; it reads AVVASFIAATLLMFLVILSAF. Residues 216–221 are Cytoplasmic-facing; it reads ALKRTT.

Belongs to the Casparian strip membrane proteins (CASP) family. In terms of assembly, homodimer and heterodimers with other CASP proteins. Interacts with CASP1, CASP2, CASP4 and CASP5.

The protein localises to the cell membrane. Regulates membrane-cell wall junctions and localized cell wall deposition. Required for establishment of the Casparian strip membrane domain (CSD) and the subsequent formation of Casparian strips, a cell wall modification of the root endodermis that determines an apoplastic barrier between the intraorganismal apoplasm and the extraorganismal apoplasm and prevents lateral diffusion. In Arabidopsis thaliana (Mouse-ear cress), this protein is Casparian strip membrane protein 3 (CASP3).